A 365-amino-acid chain; its full sequence is Aminomethyltransferase (365 aa).

This sequence belongs to the GcvT family. As to quaternary structure, the glycine cleavage system is composed of four proteins: P, T, L and H.

It catalyses the reaction N(6)-[(R)-S(8)-aminomethyldihydrolipoyl]-L-lysyl-[protein] + (6S)-5,6,7,8-tetrahydrofolate = N(6)-[(R)-dihydrolipoyl]-L-lysyl-[protein] + (6R)-5,10-methylene-5,6,7,8-tetrahydrofolate + NH4(+). In terms of biological role, the glycine cleavage system catalyzes the degradation of glycine. The chain is Aminomethyltransferase from Yersinia pseudotuberculosis serotype O:1b (strain IP 31758).